A 634-amino-acid chain; its full sequence is Calcium up-regulated protein D (634 aa).

Residues 1-23 (MINIEDISKSSNQSEEKQLKSTS) are disordered. Ricin B-type lectin domains follow at residues 27-146 (KPKY…WTTF) and 117-250 (PGNG…WGIN).

Belongs to the cup family.

The protein localises to the cytoplasm. The protein resides in the membrane. Its function is as follows. May play an important role in stabilizing and/or regulating the cell membrane during Ca(2+) stress or certain stages of development. The protein is Calcium up-regulated protein D (cupD) of Dictyostelium discoideum (Social amoeba).